The primary structure comprises 1406 residues: MPTLGLLFASIGIAVLAMGVPHCRGYTIKEDESFLQQPHYASQEQLEDLFAGLEKAYPNQAKVHFLGRSLEGRNLLALQISRNTRSRNLLTPPVKYIANMHGDETVGRQLLVYMAQYLLGNHERISDLGQLVNSTDIYLVPTMNPDGYALSQEGNCESLPNYVGRGNAANIDLNRDFPDRLEQSHVHQLRAQSRQPETAALVNWIVSKPFVLSANFHGGAVVASYPYDNSLAHNECCEESLTPDDRVFKQLAHTYSDNHPIMRKGNNCNDSFSGGITNGAHWYELSGGMQDFNYAFSNCFELTIELSCCKYPAASTLPQEWQRNKASLLQLLRQAHIGIKGLVTDASGFPIADANVYVAGLEEKPMRTSKRGEYWRLLTPGLYSVHASAFGYQTSAPQQVRVTNDNQEALRLDFKLAPVETNFDGNFRKVKVERSEPPQKLKKQFNGFLTPTKYEHHNFTAMESYLRAISSSYPSLTRLYSIGKSVQGRDLWVLEIFATPGSHVPGVPEFKYVANMHGNEVVGKELLLILTKYMLERYGNDDRITKLVNGTRMHFLYSMNPDGYEISIEGDRTGGVGRANAHGIDLNRNFPDQYGTDRFNKVTEPEVAAVMNWTLSLPFVLSANLHGGSLVANYPFDDNENDFNDPFMRLRNSSINGRKPNPTEDNALFKHLAGIYSNAHPTMYLGQPCELFQNEFFPDGITNGAQWYSVTGGMQDWNYVRAGCLELTIEMGCDKFPKAAELSRYWEDHREPLLQFIEQVHCGIHGFVHSTIGTPIAGAVVRLDGANHSTYSQVFGDYWKLALPGRHNLTVLGDNYAPLRMEVEVPDVHPFEMRMDITLMPDDPQHWASANDFRIIENVVNTRYHTNPQVRARLAELENQNGQIASFGYADSEFGTIFNYLKMTSDIGEPEEHKYKLLVVSSLYDTTAPLGREILLNLIRHLVEGFKLQDTSVVELLKRSVIYFLPQTSKFQNVFDMYNSNTSICDPVLGDELAERILGPETDQAKDVFLQFLRSERFDLMLTFGAGNSDLNYPKGDSVLVKFAHRMQRTEFNYSPLQCPPSATRQLHRETTERLTNMMYRIYNLPVYTLGISCCRMPHQKKIASVWRKNIDKIKNFLALVKTGVSGLVQNDKGQPLREAYVRLLEHDRIINVTKNVARFQLMLPHGLYGLEVTAPNYESQMIKVDVEDGRVTELGIIRMHPFTLIRGVVLELPNNDNRATTSIAGVVLDESNHPVRNAKVSVVGQTQLRNFTGSMGQYRISAVPLGTITLKVEAPRHLEATRQMHLIQGGLATENVVFHLKVNEHVFGLPRFLFILCASVLIIVGVIVCVLCAQFWFYRRHRGDKPYYNFSLLPQRGKEQFGLEDDDGGDDGETELFRSPIKRELSQRAHLVNNQTNYSFIIQAA.

Positions 1–25 are cleaved as a signal peptide; the sequence is MPTLGLLFASIGIAVLAMGVPHCRG. At 26–1312 the chain is on the extracellular side; that stretch reads YTIKEDESFL…VNEHVFGLPR (1287 aa). Peptidase M14 domains lie at 39–335 and 455–760; these read HYAS…LRQA and EHHN…IEQV. The Zn(2+) site is built by His101 and Glu104. A glycan (N-linked (GlcNAc...) asparagine) is linked at Asn133. Disulfide bonds link Cys156–Cys309, Cys236–Cys237, and Cys268–Cys308. Zn(2+) is bound at residue His217. Residue Asn269 is glycosylated (N-linked (GlcNAc...) asparagine). The Proton donor/acceptor role is filled by Glu305. Asn458 carries an N-linked (GlcNAc...) asparagine glycan. 2 residues coordinate Zn(2+): His517 and Glu520. Asn549 and Asn612 each carry an N-linked (GlcNAc...) asparagine glycan. His626 is a Zn(2+) binding site. The N-linked (GlcNAc...) asparagine glycan is linked to Asn652. Catalysis depends on Glu730, which acts as the Proton donor/acceptor. Asn787, Asn808, Asn981, Asn1152, and Asn1251 each carry an N-linked (GlcNAc...) asparagine glycan. Residues 863 to 1121 form the Peptidase M14 3 domain; that stretch reads RYHTNPQVRA…DKIKNFLALV (259 aa). The chain crosses the membrane as a helical span at residues 1313-1333; it reads FLFILCASVLIIVGVIVCVLC. The Cytoplasmic portion of the chain corresponds to 1334-1406; that stretch reads AQFWFYRRHR…TNYSFIIQAA (73 aa). Residues 1343 to 1345 carry the Cell attachment site motif; that stretch reads RGD. Residue Ser1380 is modified to Phosphoserine.

It belongs to the peptidase M14 family. Monomer. The cofactor is Zn(2+). Expressed in the central nervous system (CNS) of adults and larvae. In the adult brain, increased levels of expression in the mushroom body (MB) and neurosecretory cells.

It is found in the membrane. Its subcellular location is the cytoplasm. The protein localises to the perinuclear region. It localises to the golgi apparatus. The protein resides in the trans-Golgi network. It is found in the secreted. It catalyses the reaction Releases C-terminal Arg and Lys from polypeptides.. Its activity is regulated as follows. Inhibited by 2-guanidinoethylmercaptosuccinic acid (GEMSA). Metallocarboxypeptidase that catalyzes the release of C-terminal arginine or lysine residues from peptides and proteins. Functionally important for processing a broad range of proteins including growth factors, peptide hormones (such as Akh) and neuropeptides. Consequently, it is involved in a wide range of processes including viability, memory formation, locomotive activity, wing formation, and peptide-regulated behaviors such as starvation-induced hyperactivity, appetitive gustatory preference, and cold and ethanol sensitivity. Key enzyme in neuropeptide processing. Involved in regulation of memory formation, possibly via the insulin pathway in neurosecretory cells. The sequence is that of Carboxypeptidase D from Drosophila melanogaster (Fruit fly).